The primary structure comprises 197 residues: NADH-quinone oxidoreductase subunit B (197 aa).

The [4Fe-4S] cluster site is built by Cys63, Cys64, Cys129, and Cys159.

The protein belongs to the complex I 20 kDa subunit family. NDH-1 is composed of 14 different subunits. Subunits NuoB, C, D, E, F, and G constitute the peripheral sector of the complex. Requires [4Fe-4S] cluster as cofactor.

Its subcellular location is the cell inner membrane. The enzyme catalyses a quinone + NADH + 5 H(+)(in) = a quinol + NAD(+) + 4 H(+)(out). Its function is as follows. NDH-1 shuttles electrons from NADH, via FMN and iron-sulfur (Fe-S) centers, to quinones in the respiratory chain. The immediate electron acceptor for the enzyme in this species is believed to be a menaquinone. Couples the redox reaction to proton translocation (for every two electrons transferred, four hydrogen ions are translocated across the cytoplasmic membrane), and thus conserves the redox energy in a proton gradient. In Bacteroides thetaiotaomicron (strain ATCC 29148 / DSM 2079 / JCM 5827 / CCUG 10774 / NCTC 10582 / VPI-5482 / E50), this protein is NADH-quinone oxidoreductase subunit B.